Consider the following 158-residue polypeptide: Trafficking protein particle complex subunit 6B (158 aa).

This sequence belongs to the TRAPP small subunits family. BET3 subfamily. As to quaternary structure, homodimer. Part of a TRAPP complex. Heterodimer with TRAPPC3. The heterodimer TRAPPC6B-TRAPPC3 interacts with TRAPPC1 likely providing a core for TRAPP complex formation. In terms of tissue distribution, widely expressed. Expressed in lung, heart, liver, spleen, brain and kidney.

The protein resides in the golgi apparatus. The protein localises to the cis-Golgi network. It localises to the endoplasmic reticulum. Its function is as follows. Component of a transport protein particle (TRAPP) complex that may function in specific stages of inter-organelle traffic. Specifically involved in the early development of neural circuitry, likely by controlling the frequency and amplitude of intracellular calcium transients implicated in the regulation of neuron differentiation and survival. This chain is Trafficking protein particle complex subunit 6B, found in Mus musculus (Mouse).